A 64-amino-acid polypeptide reads, in one-letter code: Large ribosomal subunit protein bL35 (64 aa).

Positions 1–10 are enriched in polar residues; that stretch reads MPKMKTNSAA. Positions 1–64 are disordered; it reads MPKMKTNSAA…AKKLHQLLQK (64 aa). Residues 54 to 64 are compositionally biased toward basic residues; sequence QAKKLHQLLQK.

It belongs to the bacterial ribosomal protein bL35 family.

The polypeptide is Large ribosomal subunit protein bL35 (Bifidobacterium longum (strain NCC 2705)).